A 262-amino-acid chain; its full sequence is Small ribosomal subunit protein eS4 (262 aa).

The region spanning 42-105 (LPLVVFLRNR…NEHFRLVYDV (64 aa)) is the S4 RNA-binding domain. A KOW domain is found at 178 to 211 (GRLVMVTGGRNLGRVGVIVHREKHEGGFDLVHIK).

Belongs to the eukaryotic ribosomal protein eS4 family. In terms of assembly, component of the small ribosomal subunit. Mature ribosomes consist of a small (40S) and a large (60S) subunit. The 40S subunit contains about 32 different proteins and 1 molecule of RNA (18S). The 60S subunit contains 45 different proteins and 3 molecules of RNA (25S, 5.8S and 5S).

Its subcellular location is the cytoplasm. Functionally, component of the ribosome, a large ribonucleoprotein complex responsible for the synthesis of proteins in the cell. The small ribosomal subunit (SSU) binds messenger RNAs (mRNAs) and translates the encoded message by selecting cognate aminoacyl-transfer RNA (tRNA) molecules. The large subunit (LSU) contains the ribosomal catalytic site termed the peptidyl transferase center (PTC), which catalyzes the formation of peptide bonds, thereby polymerizing the amino acids delivered by tRNAs into a polypeptide chain. The nascent polypeptides leave the ribosome through a tunnel in the LSU and interact with protein factors that function in enzymatic processing, targeting, and the membrane insertion of nascent chains at the exit of the ribosomal tunnel. This Candida albicans (strain SC5314 / ATCC MYA-2876) (Yeast) protein is Small ribosomal subunit protein eS4 (RPS42).